Consider the following 75-residue polypeptide: UPF0154 protein SERP0914 (75 aa).

The chain crosses the membrane as a helical span at residues 3-23; that stretch reads IWVAIILIVIALIAGLIGGFL.

Belongs to the UPF0154 family.

It localises to the membrane. This chain is UPF0154 protein SERP0914, found in Staphylococcus epidermidis (strain ATCC 35984 / DSM 28319 / BCRC 17069 / CCUG 31568 / BM 3577 / RP62A).